Here is a 616-residue protein sequence, read N- to C-terminus: Chaperone protein HscA (616 aa).

This sequence belongs to the heat shock protein 70 family.

Its function is as follows. Chaperone involved in the maturation of iron-sulfur cluster-containing proteins. Has a low intrinsic ATPase activity which is markedly stimulated by HscB. Involved in the maturation of IscU. In Pectobacterium atrosepticum (strain SCRI 1043 / ATCC BAA-672) (Erwinia carotovora subsp. atroseptica), this protein is Chaperone protein HscA.